Reading from the N-terminus, the 384-residue chain is Alcohol dehydrogenase class-3 (384 aa).

Residues Cys-48, His-70, Cys-100, Cys-103, Cys-106, Cys-114, and Cys-177 each coordinate Zn(2+).

Belongs to the zinc-containing alcohol dehydrogenase family. Class-III subfamily. In terms of assembly, homodimer. Zn(2+) is required as a cofactor.

Its subcellular location is the cytoplasm. The catalysed reaction is a primary alcohol + NAD(+) = an aldehyde + NADH + H(+). It catalyses the reaction a secondary alcohol + NAD(+) = a ketone + NADH + H(+). It carries out the reaction S-(hydroxymethyl)glutathione + NADP(+) = S-formylglutathione + NADPH + H(+). The enzyme catalyses S-(hydroxymethyl)glutathione + NAD(+) = S-formylglutathione + NADH + H(+). Class-III ADH is remarkably ineffective in oxidizing ethanol, but it readily catalyzes the oxidation of long-chain primary alcohols and the oxidation of S-(hydroxymethyl) glutathione. Plays a role in the calcium flux to the cytoplasm in the ASJ sensory neurons upon removal of a nitric oxide stimulus. This is Alcohol dehydrogenase class-3 from Caenorhabditis elegans.